A 317-amino-acid chain; its full sequence is MNLPDTESPAAIFLMGPTASGKSGLAIEIARHFPVEVVSVDSAQVYRYMDIGSAKPDKSIQIEIPHHLINLINPDESYSAAQFREDALSVMHGITARGRIPLLVGGTMLYFKVLQQGLATLPAADEAVRKELEQSAREQGWPAMHTVLSRLDPVIAERIKPNDSQRIQRALEVCYLTGRPMSAVLKQQQSRDFPYRVFNIALLPGDRSVLHARISQRFDKMLEIGLVDEVRMIRDQFQVTADMPAMRCVGYRQVYMYLENEISLAEMRERGVFATRQLAKRQLTWLRAMNELHGFDCLANQLAQQIIGFIQKQRIFA.

Position 16 to 23 (16 to 23 (GPTASGKS)) interacts with ATP. 18–23 (TASGKS) is a binding site for substrate. Interaction with substrate tRNA regions lie at residues 41–44 (DSAQ), 165–169 (QRIQR), and 247–252 (RCVGYR).

This sequence belongs to the IPP transferase family. In terms of assembly, monomer. The cofactor is Mg(2+).

The catalysed reaction is adenosine(37) in tRNA + dimethylallyl diphosphate = N(6)-dimethylallyladenosine(37) in tRNA + diphosphate. Functionally, catalyzes the transfer of a dimethylallyl group onto the adenine at position 37 in tRNAs that read codons beginning with uridine, leading to the formation of N6-(dimethylallyl)adenosine (i(6)A). In Nitrosomonas eutropha (strain DSM 101675 / C91 / Nm57), this protein is tRNA dimethylallyltransferase.